We begin with the raw amino-acid sequence, 75 residues long: Lipid-anchored plasma membrane protein CPP2 (75 aa).

The tract at residues 1–43 (MSQQQGYYQQGPPQQGYYQQGPPQQGYYQQGPPQQGYPQQQPV) is disordered. Tandem repeats lie at residues 4–13 (QQGYYQQGPP), 14–23 (QQGYYQQGPP), and 24–33 (QQGYYQQGPP). A 3 X 10 AA tandem repeats of Q-Q-G-Y-Y-Q-Q-G-P-P region spans residues 4–33 (QQGYYQQGPPQQGYYQQGPPQQGYYQQGPP).

This sequence belongs to the CYSTM1 family. Post-translationally, palmitoylated near the C-terminus.

It localises to the cell membrane. The chain is Lipid-anchored plasma membrane protein CPP2 from Saccharomyces cerevisiae (strain ATCC 204508 / S288c) (Baker's yeast).